The chain runs to 37 residues: Calcitonin gene-related peptide (37 aa).

C2 and C7 are joined by a disulfide. F37 carries the phenylalanine amide modification.

This sequence belongs to the calcitonin family.

In terms of biological role, CGRP induces vasodilation. It dilates a variety of vessels including the coronary, cerebral and systemic vasculature. Its abundance in the CNS also points toward a neurotransmitter or neuromodulator role. In Pelophylax ridibundus (Marsh frog), this protein is Calcitonin gene-related peptide.